A 101-amino-acid chain; its full sequence is Small ribosomal subunit protein uS14 (101 aa).

The interval 1-21 (MAKVSLIKKNESRKKKSQSLH) is disordered. The span at 11–21 (ESRKKKSQSLH) shows a compositional bias: basic residues.

This sequence belongs to the universal ribosomal protein uS14 family. Part of the 30S ribosomal subunit. Contacts proteins S3 and S10.

Functionally, binds 16S rRNA, required for the assembly of 30S particles and may also be responsible for determining the conformation of the 16S rRNA at the A site. This chain is Small ribosomal subunit protein uS14, found in Rickettsia canadensis (strain McKiel).